Reading from the N-terminus, the 279-residue chain is Urease accessory protein UreD (279 aa).

Belongs to the UreD family. In terms of assembly, ureD, UreF and UreG form a complex that acts as a GTP-hydrolysis-dependent molecular chaperone, activating the urease apoprotein by helping to assemble the nickel containing metallocenter of UreC. The UreE protein probably delivers the nickel.

It is found in the cytoplasm. Its function is as follows. Required for maturation of urease via the functional incorporation of the urease nickel metallocenter. The protein is Urease accessory protein UreD of Streptococcus thermophilus (strain CNRZ 1066).